We begin with the raw amino-acid sequence, 173 residues long: Photosystem I assembly protein Ycf3 (173 aa).

TPR repeat units lie at residues 35-68, 72-105, and 120-153; these read AFVYYRDGMSAQAEGEYAEALEYYEEALTLEEDT, GYILYNMGLIYASNGDHDKALELYHQAIELNPRL, and GEKAKETGDHDGGEALFDQAADYWIRAIRMAPNN.

Belongs to the Ycf3 family.

Its subcellular location is the cellular thylakoid membrane. Its function is as follows. Essential for the assembly of the photosystem I (PSI) complex. May act as a chaperone-like factor to guide the assembly of the PSI subunits. This Nostoc sp. (strain PCC 7120 / SAG 25.82 / UTEX 2576) protein is Photosystem I assembly protein Ycf3.